The following is a 193-amino-acid chain: Probable molybdenum cofactor guanylyltransferase (193 aa).

GTP is bound by residues 9–11, Lys-21, Asp-64, and Asp-93; that span reads TAG. Asp-93 contributes to the Mg(2+) binding site.

It belongs to the MobA family. It depends on Mg(2+) as a cofactor.

It localises to the cytoplasm. The catalysed reaction is Mo-molybdopterin + GTP + H(+) = Mo-molybdopterin guanine dinucleotide + diphosphate. Functionally, transfers a GMP moiety from GTP to Mo-molybdopterin (Mo-MPT) cofactor (Moco or molybdenum cofactor) to form Mo-molybdopterin guanine dinucleotide (Mo-MGD) cofactor. The chain is Probable molybdenum cofactor guanylyltransferase from Deinococcus radiodurans (strain ATCC 13939 / DSM 20539 / JCM 16871 / CCUG 27074 / LMG 4051 / NBRC 15346 / NCIMB 9279 / VKM B-1422 / R1).